The primary structure comprises 248 residues: Murein peptide amidase A (248 aa).

A Peptidase M14 domain is found at 3 to 245; the sequence is RYYSNNQEIT…DAFIALLQHD (243 aa). Positions 60, 63, and 168 each coordinate Zn(2+). Catalysis depends on Glu221, which acts as the Proton donor/acceptor.

It belongs to the peptidase M14 family. In terms of assembly, homodimer. Requires Zn(2+) as cofactor.

It is found in the cytoplasm. The enzyme catalyses L-alanyl-gamma-D-glutamyl-meso-2,6-diaminopimelate + H2O = L-alanyl-D-glutamate + meso-2,6-diaminopimelate. The protein operates within cell wall degradation; peptidoglycan degradation. Functionally, involved in muropeptide degradation. Catalyzes the hydrolysis of the gamma-D-glutamyl-diaminopimelic acid (gamma-D-Glu-Dap) amide bond in the murein tripeptide L-alanyl-gamma-D-glutamyl-meso-diaminopimelic acid, leading to the formation of L-Ala-gamma-D-Glu and Dap. Has weak activity with L-Ala-gamma-D-Glu-L-Lys, MurNAc-tripeptide and gamma-D-Glu-meso-Dap. Cannot hydrolyze murein tetrapeptide. In Vibrio campbellii (strain ATCC BAA-1116), this protein is Murein peptide amidase A.